The following is a 63-amino-acid chain: MKAQELREKSVEELNTELLNLLREQFNLRMQAASGQLQQTHLLKQVRRNVARVKTLLTEKAGV.

It belongs to the universal ribosomal protein uL29 family.

This is Large ribosomal subunit protein uL29 from Serratia proteamaculans (strain 568).